The following is a 265-amino-acid chain: Type III pantothenate kinase (265 aa).

6-13 (DVGNTHTV) contacts ATP. 112-115 (GADR) is a substrate binding site. Asp114 acts as the Proton acceptor in catalysis. Asp134 contacts K(+). Residue Thr137 participates in ATP binding. Thr189 is a substrate binding site.

This sequence belongs to the type III pantothenate kinase family. Homodimer. Requires NH4(+) as cofactor. It depends on K(+) as a cofactor.

The protein resides in the cytoplasm. The catalysed reaction is (R)-pantothenate + ATP = (R)-4'-phosphopantothenate + ADP + H(+). Its pathway is cofactor biosynthesis; coenzyme A biosynthesis; CoA from (R)-pantothenate: step 1/5. Its function is as follows. Catalyzes the phosphorylation of pantothenate (Pan), the first step in CoA biosynthesis. The protein is Type III pantothenate kinase of Streptomyces avermitilis (strain ATCC 31267 / DSM 46492 / JCM 5070 / NBRC 14893 / NCIMB 12804 / NRRL 8165 / MA-4680).